Reading from the N-terminus, the 380-residue chain is Tubby-like F-box protein 9 (380 aa).

An F-box domain is found at 30–76 (PFSWSELPEELLREILIRVETVDGGDWPSRRNVVACAGVCRSWRILT). Positions 258-283 (SSRSSPVFRSHSKPLRSNSASCSDSG) are disordered. A compositionally biased stretch (polar residues) spans 272-283 (LRSNSASCSDSG).

It belongs to the TUB family. Part of a SCF (SKP1-cullin-F-box) protein ligase complex. Interacts with SKP1A/ASK1 and XERICO. Ubiquitous.

The protein operates within protein modification; protein ubiquitination. In terms of biological role, component of SCF(ASK-cullin-F-box) E3 ubiquitin ligase complexes, which may mediate the ubiquitination and subsequent proteasomal degradation of target proteins. Confers sensitivity to ABA during seed germination and early seedling development. In Arabidopsis thaliana (Mouse-ear cress), this protein is Tubby-like F-box protein 9.